Here is a 249-residue protein sequence, read N- to C-terminus: Caffeoyl-CoA O-methyltransferase (249 aa).

Residue K21 coordinates substrate. S-adenosyl-L-methionine-binding positions include T63, E85, 87–88 (GV), S93, D111, and A140. D162 contacts substrate. D162 is a binding site for a divalent metal cation. D164 contacts S-adenosyl-L-methionine. The a divalent metal cation site is built by D188 and N189. N193 is a substrate binding site.

The protein belongs to the class I-like SAM-binding methyltransferase superfamily. Cation-dependent O-methyltransferase family. CCoAMT subfamily. In terms of assembly, homodimer. It depends on a divalent metal cation as a cofactor.

It carries out the reaction (E)-caffeoyl-CoA + S-adenosyl-L-methionine = (E)-feruloyl-CoA + S-adenosyl-L-homocysteine + H(+). Its pathway is aromatic compound metabolism; phenylpropanoid biosynthesis. Methylates caffeoyl-CoA to feruloyl-CoA and 5-hydroxyferuloyl-CoA to sinapoyl-CoA. Plays a role in the synthesis of feruloylated polysaccharides. Involved in the reinforcement of the plant cell wall. Also involved in the responding to wounding or pathogen challenge by the increased formation of cell wall-bound ferulic acid polymers. The chain is Caffeoyl-CoA O-methyltransferase from Eucalyptus gunnii (Cider gum).